The primary structure comprises 109 residues: Probable guanidinium efflux system subunit GdnC (109 aa).

The next 4 helical transmembrane spans lie at 3–23, 26–46, 55–75, and 81–101; these read WGSV…LKHA, ALEW…LVKA, VYAV…IALF, and IAKL…KLVT.

It belongs to the drug/metabolite transporter (DMT) superfamily. Small multidrug resistance (SMR) (TC 2.A.7.1) family. YkkC/YkkD subfamily. The efflux pump is composed of GdnC and GdnD.

It is found in the cell membrane. Probably involved in guanidinium transport. In Bacillus licheniformis (strain ATCC 14580 / DSM 13 / JCM 2505 / CCUG 7422 / NBRC 12200 / NCIMB 9375 / NCTC 10341 / NRRL NRS-1264 / Gibson 46), this protein is Probable guanidinium efflux system subunit GdnC.